We begin with the raw amino-acid sequence, 370 residues long: MAFRRRTKSYPLFSQEFVIHNHADIGFCLVLCVLIGLMFEVTAKTAFLFILPQYNISVPTADSETVHYHYGPKDLVTILFYIFITIILHAVVQEYILDKISKRLHLSKVKHSKFNESGQLVVFHFTSVIWCFYVVVTEGYLTNPRSLWEDYPHVHLPFQVKFFYLCQLAYWLHALPELYFQKVRKEEIPRQLQYICLYLVHIAGAYLLNLSRLGLILLLLQYSTEFLFHTARLFYFADENNEKLFSAWAAVFGVTRLFILTLAVLAIGFGLARMENQAFDPEKGNFNTLFCRLCVLLLVCAAQAWLMWRFIHSQLRHWREYWNEQSAKRRVPATPRLPARLIKRESGYHENGVVKAENGTSPRTKKLKSP.

Topologically, residues 1–22 (MAFRRRTKSYPLFSQEFVIHNH) are cytoplasmic. Residues 23–43 (ADIGFCLVLCVLIGLMFEVTA) form a helical membrane-spanning segment. The Extracellular portion of the chain corresponds to 44-75 (KTAFLFILPQYNISVPTADSETVHYHYGPKDL). The N-linked (GlcNAc...) asparagine glycan is linked to asparagine 55. A helical membrane pass occupies residues 76 to 96 (VTILFYIFITIILHAVVQEYI). Over 97–119 (LDKISKRLHLSKVKHSKFNESGQ) the chain is Cytoplasmic. Residues 112–321 (SKFNESGQLV…HSQLRHWREY (210 aa)) enclose the TLC domain. Residues 120 to 140 (LVVFHFTSVIWCFYVVVTEGY) traverse the membrane as a helical segment. Residues 141–159 (LTNPRSLWEDYPHVHLPFQ) are Extracellular-facing. The chain crosses the membrane as a helical span at residues 160–180 (VKFFYLCQLAYWLHALPELYF). At 181–191 (QKVRKEEIPRQ) the chain is on the cytoplasmic side. The chain crosses the membrane as a helical span at residues 192–209 (LQYICLYLVHIAGAYLLN). Residues 210–214 (LSRLG) lie on the Extracellular side of the membrane. A helical membrane pass occupies residues 215–235 (LILLLLQYSTEFLFHTARLFY). At 236–250 (FADENNEKLFSAWAA) the chain is on the cytoplasmic side. A helical membrane pass occupies residues 251–271 (VFGVTRLFILTLAVLAIGFGL). Residues 272–287 (ARMENQAFDPEKGNFN) are Extracellular-facing. Residues 288–308 (TLFCRLCVLLLVCAAQAWLMW) form a helical membrane-spanning segment. The Cytoplasmic segment spans residues 309 to 370 (RFIHSQLRHW…SPRTKKLKSP (62 aa)). A disordered region spans residues 348 to 370 (YHENGVVKAENGTSPRTKKLKSP).

Belongs to the TRAM family. As to quaternary structure, interacts with SERCA2B and COL1A1.

It is found in the membrane. In terms of biological role, necessary for collagen type I synthesis. May couple the activity of the ER Ca(2+) pump SERCA2B with the activity of the translocon. This coupling may increase the local Ca(2+) concentration at the site of collagen synthesis, and a high Ca(2+) concentration may be necessary for the function of molecular chaperones involved in collagen folding. Required for proper insertion of the first transmembrane helix N-terminus of TM4SF20 into the ER lumen, may act as a ceramide sensor for regulated alternative translocation (RAT). This is Translocating chain-associated membrane protein 2 (TRAM2) from Homo sapiens (Human).